A 376-amino-acid polypeptide reads, in one-letter code: MAKKSNSKKSTPVSTPSKEKKKVIEKKSSTAIPRERVIKAVNELIKFTSKPQDENNEEGNNGKKNLLEDDEEELKKDLQLIVVNNKSFTGTSKSFKLKLLNVKHSFYKPWKEASATAVKDFKVLLILKDSDIKKVSEDDLFDQLDSEGIKVDEIICGKDLKTVYKAYEARNAFISQFSLILADDSIVTSLPKLMGGKAYNKVETTPISIRTHANKEFSLTTLTNNIKKVYMNQLPVKLPRGTTLNVHLGNLEWLRPEEFVDNVELISEQLIKAYQIRSIFIKTNRSPVLPLYYNQDVLDELEAKKDKIEETHEDDMVTIDGVQVHLSTFNKGLMEIANPSELGSIFSKQINNAKKRSSSELEKESSESEAVKKAKS.

2 disordered regions span residues methionine 1–serine 29 and arginine 356–serine 376. The interval glutamate 310–serine 376 is required for interaction with CDC4. Over residues serine 357–serine 376 the composition is skewed to basic and acidic residues.

In terms of assembly, interacts with CDC4, PRE4, PRE6, RPT1 and SCL1 as part of the fully assembled 26S proteasome. Interacts with pre-ribosomal particles constituent NOP7.

Its subcellular location is the nucleus. It is found in the nucleolus. Functionally, an adapter protein that specifically links the 26S proteasome to its substrate CDC4 which is one of the substrate recognition subunits of the SCF E3 ubiquitin ligase complex. Required for turnover of cell cycle regulatory proteins CDC4 and GRR1. Required for synthesis and nuclear export of 60S ribosomal subunits. Required for vegetative growth. The polypeptide is Proteasome-interacting protein CIC1 (CIC1) (Saccharomyces cerevisiae (strain ATCC 204508 / S288c) (Baker's yeast)).